Reading from the N-terminus, the 395-residue chain is Zinc-regulated GTPase metalloprotein activator 1E (395 aa).

A disordered region spans residues 1-22 (MLPAVGSVDEEEDPAEEDCPEL). Residues 8-20 (VDEEEDPAEEDCP) are compositionally biased toward acidic residues. Residues 17-24 (EDCPELVP) carry the psi-PxLVp motif motif. GTP is bound at residue 49-56 (GYLGAGKT). Residues Cys107, Cys109, and Cys110 each coordinate Zn(2+). The CXCC motif signature appears at 107–110 (CLCC). Residues 110–114 (CSVKD) and 203–206 (NKTD) each bind GTP. In terms of domain architecture, CobW C-terminal spans 274–377 (IVTITFEVPG…ILKQLFIATV (104 aa)).

This sequence belongs to the SIMIBI class G3E GTPase family. ZNG1 subfamily.

The protein resides in the nucleus. The catalysed reaction is GTP + H2O = GDP + phosphate + H(+). Its function is as follows. Zinc chaperone that directly transfers zinc cofactor to target metalloproteins, thereby activating them. Catalyzes zinc insertion into the active site of methionine aminopeptidase METAP1, which function to cleave the initiator methionine from polypeptides during or after protein translation. Mechanistically, the N-terminal psi-PxLVp motif binds to the C6H2-type zinc finger of inactive form of METAP1. After formation of the docked complex, zinc is transferred from the CXCC motif in the GTPase domain of ZNG1E to the zinc binding site in the peptidase domain of METAP1 in a process requiring GTP hydrolysis. GTP/GDP exchange is required for release of active METAP1. The polypeptide is Zinc-regulated GTPase metalloprotein activator 1E (Homo sapiens (Human)).